The chain runs to 648 residues: Threonine--tRNA ligase (648 aa).

The TGS domain occupies 1-61 (MIDIILPDGS…INTATVKAIT (61 aa)). Residues 243–549 (DHRKLGRELE…LIEHYSGRLP (307 aa)) form a catalytic region. Residues cysteine 349, histidine 400, and histidine 526 each coordinate Zn(2+).

It belongs to the class-II aminoacyl-tRNA synthetase family. In terms of assembly, homodimer. Zn(2+) serves as cofactor.

It is found in the cytoplasm. The catalysed reaction is tRNA(Thr) + L-threonine + ATP = L-threonyl-tRNA(Thr) + AMP + diphosphate + H(+). Catalyzes the attachment of threonine to tRNA(Thr) in a two-step reaction: L-threonine is first activated by ATP to form Thr-AMP and then transferred to the acceptor end of tRNA(Thr). Also edits incorrectly charged L-seryl-tRNA(Thr). In Orientia tsutsugamushi (strain Boryong) (Rickettsia tsutsugamushi), this protein is Threonine--tRNA ligase.